A 419-amino-acid chain; its full sequence is Oxamate carbamoyltransferase subunit AllG (419 aa).

This sequence belongs to the AllG family. The OXTCase is composed of 3 subunits, AllF, AllG and AllH. The cofactor is Mg(2+).

It carries out the reaction oxamate + carbamoyl phosphate = N-carbamoyl-2-oxoglycine + phosphate. It participates in nitrogen metabolism; (S)-allantoin degradation. Component of a carbamoyltransferase involved in the anaerobic nitrogen utilization via the assimilation of allantoin. Catalyzes the conversion of oxalurate (N-carbamoyl-2-oxoglycine) to oxamate and carbamoyl phosphate. The sequence is that of Oxamate carbamoyltransferase subunit AllG from Escherichia coli (strain K12).